The sequence spans 435 residues: Tol-Pal system protein TolB (435 aa).

The N-terminal stretch at M1–A28 is a signal peptide. The disordered stretch occupies residues S288 to D310.

It belongs to the TolB family. In terms of assembly, the Tol-Pal system is composed of five core proteins: the inner membrane proteins TolA, TolQ and TolR, the periplasmic protein TolB and the outer membrane protein Pal. They form a network linking the inner and outer membranes and the peptidoglycan layer.

Its subcellular location is the periplasm. In terms of biological role, part of the Tol-Pal system, which plays a role in outer membrane invagination during cell division and is important for maintaining outer membrane integrity. The protein is Tol-Pal system protein TolB of Rhizobium leguminosarum bv. trifolii (strain WSM2304).